The primary structure comprises 218 residues: 3-isopropylmalate dehydratase small subunit (218 aa).

It belongs to the LeuD family. LeuD type 1 subfamily. As to quaternary structure, heterodimer of LeuC and LeuD.

It carries out the reaction (2R,3S)-3-isopropylmalate = (2S)-2-isopropylmalate. The protein operates within amino-acid biosynthesis; L-leucine biosynthesis; L-leucine from 3-methyl-2-oxobutanoate: step 2/4. Its function is as follows. Catalyzes the isomerization between 2-isopropylmalate and 3-isopropylmalate, via the formation of 2-isopropylmaleate. The sequence is that of 3-isopropylmalate dehydratase small subunit from Alkalilimnicola ehrlichii (strain ATCC BAA-1101 / DSM 17681 / MLHE-1).